We begin with the raw amino-acid sequence, 352 residues long: Cobalt transport protein NhlF (352 aa).

8 helical membrane-spanning segments follow: residues 23 to 43, 46 to 66, 95 to 115, 131 to 151, 206 to 226, 230 to 250, 290 to 310, and 323 to 343; these read LASV…LYLG, GNPA…VLGV, VGFF…LVVA, EIGG…VAGL, PVGL…LLTL, AATG…LFAA, VIGL…LPMF, and FEFL…GALL.

This sequence belongs to the NiCoT transporter (TC 2.A.52) family.

The protein resides in the cell membrane. With respect to regulation, cobalt uptake is inhibited by uncouplers (CCCP and 3,5-di-tert-butyl-4-hydroxybenzylidenemalononitrile) and by the addition of excess nickel. Functionally, mediates energy-dependent uptake of cobalt ions into the cell. Can also transport nickel ions, but cobalt is the preferred substrate. This Rhodococcus rhodochrous protein is Cobalt transport protein NhlF (nhlF).